Reading from the N-terminus, the 168-residue chain is Putative insulin-like growth factor 2 antisense gene protein (168 aa).

2 disordered regions span residues 1 to 91 (MSKR…ERSN) and 108 to 168 (PLRR…RPGK). Basic residues-rich tracts occupy residues 59–70 (AQRRRGSARRGA) and 159–168 (RWRQPGRPGK).

The protein is Putative insulin-like growth factor 2 antisense gene protein (IGF2-AS) of Homo sapiens (Human).